A 157-amino-acid chain; its full sequence is Dihydrofolate reductase type 1 (157 aa).

The DHFR domain occupies 2 to 156 (KLSLMVAISK…INYSYQIWQK (155 aa)).

Belongs to the dihydrofolate reductase family. As to quaternary structure, homodimer.

It catalyses the reaction (6S)-5,6,7,8-tetrahydrofolate + NADP(+) = 7,8-dihydrofolate + NADPH + H(+). It participates in cofactor biosynthesis; tetrahydrofolate biosynthesis; 5,6,7,8-tetrahydrofolate from 7,8-dihydrofolate: step 1/1. Its function is as follows. Key enzyme in folate metabolism. Catalyzes an essential reaction for de novo glycine and purine synthesis, and for DNA precursor synthesis. In Escherichia coli, this protein is Dihydrofolate reductase type 1 (dhfrI).